A 676-amino-acid polypeptide reads, in one-letter code: Probable LRR receptor-like serine/threonine-protein kinase At4g31250 (676 aa).

The signal sequence occupies residues 1-26 (MTRDDKFPIVYSLLLIVLLFVSPIYG). Residues 27 to 242 (DGDADALLKF…LLPCRYTRPP (216 aa)) are Extracellular-facing. N-linked (GlcNAc...) asparagine glycosylation is found at asparagine 42, asparagine 73, and asparagine 83. 5 LRR repeats span residues 98-122 (IRGLKSISFMRNHFEGKIPRGIDGL), 123-146 (VSLAHLYLAHNQFTGEIDGDLFSG), 148-171 (KALLKVHLEGNRFSGEIPESLGKL), 172-195 (PKLTELNLEDNMFTGKIPAFKQKN), and 197-218 (VTVNVANNQLEGRIPLTLGLMN). N-linked (GlcNAc...) asparagine glycosylation is present at asparagine 218. A helical transmembrane segment spans residues 243 to 263 (FFTVFLLALTILAVVVLITVF). The Cytoplasmic portion of the chain corresponds to 264–676 (LSVCILSRRQ…RAMTEEFSLM (413 aa)). A compositionally biased stretch (polar residues) spans 319–330 (TVQRDSTATSGA). A disordered region spans residues 319–347 (TVQRDSTATSGAISVGGLSPDEDKRGDQR). Residues 366–640 (RASAEVLGSG…HEAVDRIEEV (275 aa)) form the Protein kinase domain. Residue serine 368 is modified to Phosphoserine. ATP-binding positions include 372–380 (LGSGGFGSS) and lysine 394. A phosphoserine mark is found at serine 446 and serine 543. The tract at residues 641–676 (DRDAGGGQESVRSSYVTASDGDHRSSRAMTEEFSLM) is disordered.

This sequence belongs to the protein kinase superfamily. Ser/Thr protein kinase family.

The protein resides in the membrane. The catalysed reaction is L-seryl-[protein] + ATP = O-phospho-L-seryl-[protein] + ADP + H(+). It catalyses the reaction L-threonyl-[protein] + ATP = O-phospho-L-threonyl-[protein] + ADP + H(+). The protein is Probable LRR receptor-like serine/threonine-protein kinase At4g31250 of Arabidopsis thaliana (Mouse-ear cress).